Consider the following 256-residue polypeptide: MTDLKKAAQRAIELMDLTTLNDDDTDQKVIDLCHKAKTPAGNTAAICIYPRFIPIARKTLDEIGAEDIQIATVTNFPHGNDDIAIAVLETRAAVAYGADEVDVVFPYRALMEGNETVGFELVKACKEACGEVLLKVIIESGVLADPALIRRASELSIDAGADFIKTSTGKVPVNATLEAAEIMLTVISEKNTQVGFKPAGGVRDAAQAAEFLGVAERILGADWVSPRTFRFGASSLLNSLLHTLELADAPKPTQGY.

Asp102 serves as the catalytic Proton donor/acceptor. Lys165 acts as the Schiff-base intermediate with acetaldehyde in catalysis. Lys197 (proton donor/acceptor) is an active-site residue.

The protein belongs to the DeoC/FbaB aldolase family. DeoC type 2 subfamily.

It is found in the cytoplasm. It catalyses the reaction 2-deoxy-D-ribose 5-phosphate = D-glyceraldehyde 3-phosphate + acetaldehyde. It functions in the pathway carbohydrate degradation; 2-deoxy-D-ribose 1-phosphate degradation; D-glyceraldehyde 3-phosphate and acetaldehyde from 2-deoxy-alpha-D-ribose 1-phosphate: step 2/2. Catalyzes a reversible aldol reaction between acetaldehyde and D-glyceraldehyde 3-phosphate to generate 2-deoxy-D-ribose 5-phosphate. The chain is Deoxyribose-phosphate aldolase from Shewanella sp. (strain W3-18-1).